An 81-amino-acid chain; its full sequence is Protein Vpu (81 aa).

The Extracellular portion of the chain corresponds to 1-7; sequence MQSLQIL. Residues 8-28 traverse the membrane as a helical segment; it reads AIVSLVVVAIIAIVVWTIVLI. The Cytoplasmic segment spans residues 29-81; it reads EYRKILRQRKIDRLFDRIREKAEDSGNESERDQEELSALVEMGHLAPWDVDDL. Phosphoserine; by host CK2 occurs at positions 53 and 57.

This sequence belongs to the HIV-1 VPU protein family. In terms of assembly, homopentamer. Interacts with host CD4 and BRTC; these interactions induce proteasomal degradation of CD4. Interacts with host BST2; this interaction leads to the degradation of host BST2. Interacts with host FBXW11. Interacts with host AP1M1; this interaction plays a role in the mistrafficking and subsequent degradation of host BST2. Interacts with host RANBP2; this interaction allows Vpu to down-regulate host BLM sumoylation. Post-translationally, phosphorylated by host CK2. This phosphorylation is necessary for interaction with human BTRC and degradation of CD4.

It localises to the host membrane. Ion channel activity is inhibited by hexamethylene amiloride in vitro. Enhances virion budding by targeting host CD4 and Tetherin/BST2 to proteasome degradation. Degradation of CD4 prevents any unwanted premature interactions between viral Env and its host receptor CD4 in the endoplasmic reticulum. Degradation of antiretroviral protein Tetherin/BST2 is important for virion budding, as BST2 tethers new viral particles to the host cell membrane. Mechanistically, Vpu bridges either CD4 or BST2 to BTRC, a substrate recognition subunit of the Skp1/Cullin/F-box protein E3 ubiquitin ligase, induces their ubiquitination and subsequent proteasomal degradation. The alteration of the E3 ligase specificity by Vpu seems to promote the degradation of host IKBKB, leading to NF-kappa-B down-regulation and subsequent apoptosis. Acts as a viroporin that forms an oligomeric ion channel in membranes. Modulates the host DNA repair mechanisms to promote degradation of nuclear viral cDNA in cells that are already productively infected in order to suppress immune sensing and proviral hyper-integration (superinfection). Manipulates PML-NBs and modulates SUMOylation of host BLM protein thereby enhancing its DNA-end processing activity toward viral unintegrated linear DNA. Also inhibits RAD52-mediated homologous repair of viral cDNA, preventing the generation of dead-end circular forms of single copies of the long terminal repeat and permitting sustained nucleolytic attack. The sequence is that of Protein Vpu from Homo sapiens (Human).